A 278-amino-acid polypeptide reads, in one-letter code: MYISNQIDPEWPRSTGCGPVGAISRATLICNLCALARSRPAMQTLPNSLPTQVTFKGTLEGLRLLIPVALPWEEVVLQLQHRLNAGERLWQGGAVVILEVGERLLDGPQLQAVTEMLTAQQLHLMRVRTVRRQTAVAAAVAGLSVEQQEAPPEENPDKPPALRGLAEPLYLQTTLRSGMSLVHPGTVIVVGDVNPGAEIVADGDILVWGTLRGVAHAGAHGNTRALIFALRLRPIQLRIADRVARASDEPPAAPQPEVAYIQDNTIHIAITTEFARRW.

It belongs to the MinC family. As to quaternary structure, interacts with MinD and FtsZ.

In terms of biological role, cell division inhibitor that blocks the formation of polar Z ring septums. Rapidly oscillates between the poles of the cell to destabilize FtsZ filaments that have formed before they mature into polar Z rings. Prevents FtsZ polymerization. The sequence is that of Probable septum site-determining protein MinC from Gloeobacter violaceus (strain ATCC 29082 / PCC 7421).